Consider the following 504-residue polypeptide: Multidrug efflux pump LfrA (504 aa).

The next 14 helical transmembrane spans lie at 19-39, 58-78, 87-107, 110-130, 145-165, 172-192, 206-226, 233-253, 275-295, 309-329, 338-358, 361-381, 408-428, and 480-500; these read WVALAVLALPVLLIAIDNTVL, LWIVDVYSLVLAALLVAMGSL, LLLIGGAGFAVVSALAAFAPS, LLVGARALLGVFGAMLMPSTL, LAIAIWASCFTAGSALGPIVG, FHWGAVFLVAVPILLPLLVLG, PFDPVSIVLSFTTMLPIVWAV, GLSAAAAAAFAVGIVSGALFV, TSSILANFLSIIGLIGFIFFI, TAGLVTLPGAVVSMIAGLAVV, DTLMVTGLVFVAVGFLMILLF, NLTVAAIIASFVVLELGVGVS, AYELGAVVGTATLGTIFTAFY, and IAPTAVIAAMLVLAAAAVVGV.

It belongs to the major facilitator superfamily.

It localises to the cell inner membrane. Its activity is regulated as follows. Inhibited by the protonophore carbonyl cyanide m-chorophenylhydrazone (CCCP). Ethidium bromide efflux is inhibited by chlorpromazine, thioridazine and verapamil. Energy-dependent efflux pump that contributes to drug resistance. Catalyzes the efflux of norfloxacin and several related fluoroquinolones (FQ). Contributes significantly to the intrinsic MICs for ethidium bromide and acriflavine. Overexpression confers low-level resistance to hydrophilic FQ such as ciprofloxacin, ofloxacin and levofloxacin, and to ethidium bromide, acridine, acriflavine, rhodamine 123 and some quaternary ammonium compounds. May contribute to resistance to certain beta-lactams. Probably uses the proton motive force to export drugs. This is Multidrug efflux pump LfrA from Mycolicibacterium smegmatis (strain ATCC 700084 / mc(2)155) (Mycobacterium smegmatis).